The primary structure comprises 505 residues: Lysine--tRNA ligase (505 aa).

Mg(2+)-binding residues include Glu415 and Glu422.

Belongs to the class-II aminoacyl-tRNA synthetase family. As to quaternary structure, homodimer. The cofactor is Mg(2+).

Its subcellular location is the cytoplasm. The enzyme catalyses tRNA(Lys) + L-lysine + ATP = L-lysyl-tRNA(Lys) + AMP + diphosphate. The sequence is that of Lysine--tRNA ligase from Shigella flexneri.